A 165-amino-acid chain; its full sequence is Phosphopantetheine adenylyltransferase (165 aa).

Position 9 (T9) interacts with substrate. Residues 9-10 and H17 each bind ATP; that span reads TF. The substrate site is built by K41, L78, and R92. Residues 93–95, E103, and 128–134 contribute to the ATP site; these read GLR and RQAIASK.

Belongs to the bacterial CoaD family. In terms of assembly, homohexamer. Mg(2+) serves as cofactor.

Its subcellular location is the cytoplasm. The catalysed reaction is (R)-4'-phosphopantetheine + ATP + H(+) = 3'-dephospho-CoA + diphosphate. It participates in cofactor biosynthesis; coenzyme A biosynthesis; CoA from (R)-pantothenate: step 4/5. Functionally, reversibly transfers an adenylyl group from ATP to 4'-phosphopantetheine, yielding dephospho-CoA (dPCoA) and pyrophosphate. The chain is Phosphopantetheine adenylyltransferase from Ruegeria pomeroyi (strain ATCC 700808 / DSM 15171 / DSS-3) (Silicibacter pomeroyi).